The primary structure comprises 37 residues: Large ribosomal subunit protein bL36c (37 aa).

Belongs to the bacterial ribosomal protein bL36 family.

The protein localises to the plastid. It localises to the chloroplast. The sequence is that of Large ribosomal subunit protein bL36c from Thalassiosira pseudonana (Marine diatom).